A 553-amino-acid chain; its full sequence is Dihydroxy-acid dehydratase (553 aa).

Asp-78 is a Mg(2+) binding site. Cys-119 is a binding site for [2Fe-2S] cluster. 2 residues coordinate Mg(2+): Asp-120 and Lys-121. Lys-121 carries the N6-carboxylysine modification. Cys-193 lines the [2Fe-2S] cluster pocket. Glu-441 provides a ligand contact to Mg(2+). Ser-467 acts as the Proton acceptor in catalysis.

Belongs to the IlvD/Edd family. In terms of assembly, homodimer. It depends on [2Fe-2S] cluster as a cofactor. Mg(2+) serves as cofactor.

The enzyme catalyses (2R)-2,3-dihydroxy-3-methylbutanoate = 3-methyl-2-oxobutanoate + H2O. It catalyses the reaction (2R,3R)-2,3-dihydroxy-3-methylpentanoate = (S)-3-methyl-2-oxopentanoate + H2O. It participates in amino-acid biosynthesis; L-isoleucine biosynthesis; L-isoleucine from 2-oxobutanoate: step 3/4. The protein operates within amino-acid biosynthesis; L-valine biosynthesis; L-valine from pyruvate: step 3/4. Its function is as follows. Functions in the biosynthesis of branched-chain amino acids. Catalyzes the dehydration of (2R,3R)-2,3-dihydroxy-3-methylpentanoate (2,3-dihydroxy-3-methylvalerate) into 2-oxo-3-methylpentanoate (2-oxo-3-methylvalerate) and of (2R)-2,3-dihydroxy-3-methylbutanoate (2,3-dihydroxyisovalerate) into 2-oxo-3-methylbutanoate (2-oxoisovalerate), the penultimate precursor to L-isoleucine and L-valine, respectively. In Geobacter metallireducens (strain ATCC 53774 / DSM 7210 / GS-15), this protein is Dihydroxy-acid dehydratase.